The sequence spans 325 residues: NADH-quinone oxidoreductase subunit H (325 aa).

The next 8 helical transmembrane spans lie at 11-31, 81-101, 114-134, 154-174, 186-206, 237-257, 265-285, and 304-324; these read ILLTVLKAVVILLVVVTCGAF, VIFTLAPMIAFTSLLLAFAIV, IGILFFLMMAGLAVYAVLFAG, LSYEVFLGLSLMGVVAQAGSF, VWNVIPQFFGFITFAIAGVAV, FFVGEYIGIVTISALMVTLFF, LPPFIWFALKTAFFMMMFILI, and ICLPLTLINLLVTAAVILWQA.

This sequence belongs to the complex I subunit 1 family. As to quaternary structure, NDH-1 is composed of 13 different subunits. Subunits NuoA, H, J, K, L, M, N constitute the membrane sector of the complex.

The protein resides in the cell inner membrane. The catalysed reaction is a quinone + NADH + 5 H(+)(in) = a quinol + NAD(+) + 4 H(+)(out). NDH-1 shuttles electrons from NADH, via FMN and iron-sulfur (Fe-S) centers, to quinones in the respiratory chain. The immediate electron acceptor for the enzyme in this species is believed to be ubiquinone. Couples the redox reaction to proton translocation (for every two electrons transferred, four hydrogen ions are translocated across the cytoplasmic membrane), and thus conserves the redox energy in a proton gradient. This subunit may bind ubiquinone. The polypeptide is NADH-quinone oxidoreductase subunit H (Escherichia coli O45:K1 (strain S88 / ExPEC)).